The primary structure comprises 290 residues: Probable 2-(5''-triphosphoribosyl)-3'-dephosphocoenzyme-A synthase (290 aa).

The protein belongs to the CitG/MdcB family.

It carries out the reaction 3'-dephospho-CoA + ATP = 2'-(5''-triphospho-alpha-D-ribosyl)-3'-dephospho-CoA + adenine. Functionally, involved in the formation of 2-(5''-phosphoribosyl)-3'-dephosphocoenzyme-A, the prosthetic group of the acyl-carrier protein of the malonate decarboxylase. This Stutzerimonas stutzeri (strain A1501) (Pseudomonas stutzeri) protein is Probable 2-(5''-triphosphoribosyl)-3'-dephosphocoenzyme-A synthase.